The chain runs to 331 residues: MLKLSEFLVQQERQHAVADNVLTLIQDIAATCQAVAREIRYGALRGNMGSAGRENVQGEEQKALDVISNDIFTAMASKQPHVAAVASEEMAQAQVFAGKQGKYLLVFDPLDGSSNVNLNLSVGSIFSILPAPEGSVDEASFLQAGSRQLAAGYALYGTSTMLVLTMGHGVHGFTLDPDQGEFYLTHPGLTIAASTEEFAINMSNQRFWQPPVQRYIAECIAGSSGPRGKDFNMRWVATMVAEVHRLLVRGGVFLYPLDSRAVGRGGRLRLLYEANPMSLLVEQAGGLATTGHRRILDVEPAGLHQRVAVMMGAREEVERLQDYHSFTDPTA.

Positions 88, 108, 110, and 111 each coordinate Mg(2+). Substrate-binding positions include 111-114 (DGSS) and N201. A Mg(2+)-binding site is contributed by E273.

It belongs to the FBPase class 1 family. As to quaternary structure, homotetramer. Requires Mg(2+) as cofactor.

The protein localises to the cytoplasm. The enzyme catalyses beta-D-fructose 1,6-bisphosphate + H2O = beta-D-fructose 6-phosphate + phosphate. It functions in the pathway carbohydrate biosynthesis; gluconeogenesis. The chain is Fructose-1,6-bisphosphatase class 1 from Methylobacillus flagellatus (strain ATCC 51484 / DSM 6875 / VKM B-1610 / KT).